Consider the following 537-residue polypeptide: ATPase expression protein 2, mitochondrial (537 aa).

The protein belongs to the AEP2 family. As to quaternary structure, binds to the 5'UTR of the OLI1 mRNA.

It localises to the mitochondrion. Its function is as follows. Required for translation of the mitochondrial OLI1 transcript coding for the mitochondrial ATP synthase subunit 9. This chain is ATPase expression protein 2, mitochondrial (AEP2), found in Eremothecium gossypii (strain ATCC 10895 / CBS 109.51 / FGSC 9923 / NRRL Y-1056) (Yeast).